The primary structure comprises 83 residues: Envelope small membrane protein (83 aa).

At 1–16 the chain is on the virion surface side; that stretch reads MFNLFLTDTVWYVGQI. The chain crosses the membrane as a helical span at residues 17 to 37; it reads IFIFAVCLMVTIIVVAFLASI. Residues 38–79 are Intravirion-facing; that stretch reads KLCIQLCGLCNTLVLSPSIYLYDRSKQLYKYYNEEMRLPLLE.

The protein belongs to the betacoronaviruses E protein family. Homopentamer. Interacts with membrane protein M in the budding compartment of the host cell, which is located between endoplasmic reticulum and the Golgi complex. Interacts with Nucleoprotein.

It is found in the host Golgi apparatus membrane. In terms of biological role, component of the viral envelope that plays a central role in virus morphogenesis and assembly. It is sufficient to form virus-like particles. Seems to be important for creating the membrane curvature needed to acquire the rounded, stable and infectious particle phenotype. Acts as a viroporin, inducing the formation of hydrophilic pores in cellular membranes. Also induces apoptosis. Plays a central role in virus morphogenesis and assembly. Acts as a viroporin and self-assembles in host membranes forming pentameric protein-lipid pores that allow ion transport. Also plays a role in the induction of apoptosis. This chain is Envelope small membrane protein, found in Mus musculus (Mouse).